The primary structure comprises 330 residues: Ketol-acid reductoisomerase (NADP(+)) (330 aa).

A KARI N-terminal Rossmann domain is found at 1–181 (MKVFYDSDFK…GLSRAGVIQT (181 aa)). NADP(+)-binding positions include 24 to 27 (YGSQ), Arg47, Ser52, and 82 to 85 (DELQ). The active site involves His107. NADP(+) is bound at residue Gly133. Residues 182–327 (TFKEETETDL…AKLRKMCGLE (146 aa)) enclose the KARI C-terminal knotted domain. 4 residues coordinate Mg(2+): Asp190, Glu194, Glu226, and Glu230. Residue Ser251 coordinates substrate.

It belongs to the ketol-acid reductoisomerase family. The cofactor is Mg(2+).

The enzyme catalyses (2R)-2,3-dihydroxy-3-methylbutanoate + NADP(+) = (2S)-2-acetolactate + NADPH + H(+). The catalysed reaction is (2R,3R)-2,3-dihydroxy-3-methylpentanoate + NADP(+) = (S)-2-ethyl-2-hydroxy-3-oxobutanoate + NADPH + H(+). It participates in amino-acid biosynthesis; L-isoleucine biosynthesis; L-isoleucine from 2-oxobutanoate: step 2/4. The protein operates within amino-acid biosynthesis; L-valine biosynthesis; L-valine from pyruvate: step 2/4. Its function is as follows. Involved in the biosynthesis of branched-chain amino acids (BCAA). Catalyzes an alkyl-migration followed by a ketol-acid reduction of (S)-2-acetolactate (S2AL) to yield (R)-2,3-dihydroxy-isovalerate. In the isomerase reaction, S2AL is rearranged via a Mg-dependent methyl migration to produce 3-hydroxy-3-methyl-2-ketobutyrate (HMKB). In the reductase reaction, this 2-ketoacid undergoes a metal-dependent reduction by NADPH to yield (R)-2,3-dihydroxy-isovalerate. This is Ketol-acid reductoisomerase (NADP(+)) from Methanococcus maripaludis (strain C5 / ATCC BAA-1333).